We begin with the raw amino-acid sequence, 142 residues long: Large ribosomal subunit protein uL13 (142 aa).

It belongs to the universal ribosomal protein uL13 family. As to quaternary structure, part of the 50S ribosomal subunit.

Functionally, this protein is one of the early assembly proteins of the 50S ribosomal subunit, although it is not seen to bind rRNA by itself. It is important during the early stages of 50S assembly. This chain is Large ribosomal subunit protein uL13, found in Cupriavidus necator (strain ATCC 17699 / DSM 428 / KCTC 22496 / NCIMB 10442 / H16 / Stanier 337) (Ralstonia eutropha).